The chain runs to 142 residues: Large ribosomal subunit protein bL21 (142 aa).

The segment covering Arg74 to Gly84 has biased composition (basic residues). A disordered region spans residues Arg74–Glu142. Basic and acidic residues predominate over residues Lys107 to Lys125. Residues Pro126 to Ala135 show a composition bias toward basic residues.

This sequence belongs to the bacterial ribosomal protein bL21 family. Part of the 50S ribosomal subunit. Contacts protein L20.

In terms of biological role, this protein binds to 23S rRNA in the presence of protein L20. This chain is Large ribosomal subunit protein bL21, found in Brucella melitensis biotype 2 (strain ATCC 23457).